Reading from the N-terminus, the 63-residue chain is Large ribosomal subunit protein bL28 (63 aa).

It belongs to the bacterial ribosomal protein bL28 family.

The protein is Large ribosomal subunit protein bL28 of Clostridium botulinum (strain ATCC 19397 / Type A).